Reading from the N-terminus, the 89-residue chain is Small ribosomal subunit protein uS15 (89 aa).

It belongs to the universal ribosomal protein uS15 family. Part of the 30S ribosomal subunit. Forms a bridge to the 50S subunit in the 70S ribosome, contacting the 23S rRNA.

Functionally, one of the primary rRNA binding proteins, it binds directly to 16S rRNA where it helps nucleate assembly of the platform of the 30S subunit by binding and bridging several RNA helices of the 16S rRNA. Forms an intersubunit bridge (bridge B4) with the 23S rRNA of the 50S subunit in the ribosome. The protein is Small ribosomal subunit protein uS15 of Streptococcus pneumoniae (strain P1031).